Consider the following 692-residue polypeptide: Elongation factor G (692 aa).

One can recognise a tr-type G domain in the interval 8 to 282 (EKVRNIGIAA…AVVDYLPAPS (275 aa)). GTP is bound by residues 17 to 24 (AHIDAGKT), 81 to 85 (DTPGH), and 135 to 138 (NKMD).

It belongs to the TRAFAC class translation factor GTPase superfamily. Classic translation factor GTPase family. EF-G/EF-2 subfamily.

It is found in the cytoplasm. Its function is as follows. Catalyzes the GTP-dependent ribosomal translocation step during translation elongation. During this step, the ribosome changes from the pre-translocational (PRE) to the post-translocational (POST) state as the newly formed A-site-bound peptidyl-tRNA and P-site-bound deacylated tRNA move to the P and E sites, respectively. Catalyzes the coordinated movement of the two tRNA molecules, the mRNA and conformational changes in the ribosome. The chain is Elongation factor G from Nostoc punctiforme (strain ATCC 29133 / PCC 73102).